A 1076-amino-acid polypeptide reads, in one-letter code: MAANAGMVAGSRNRNEFVMIRPDGDAPPPAKPGKSVNGQVCQICGDTVGVSATGDVFVACNECAFPVCRPCYEYERKEGNQCCPQCKTRYKRHKGSPRVQGDEEEEDVDDLDNEFNYKHGNGKGPEWQIQRQGEDVDLSSSSRHEQHRIPRLTSGQQISGEIPDASPDRHSIRSGTSSYVDPSVPVPVRIVDPSKDLNSYGINSVDWQERVASWRNKQDKNMMQVANKYPEARGGDMEGTGSNGEDMQMVDDARLPLSRIVPIPSNQLNLYRIVIILRLIILMFFFQYRVTHPVRDAYGLWLVSVICEIWFALSWLLDQFPKWYPINRETYLDRLALRYDREGEPSQLAPIDVFVSTVDPLKEPPLITANTVLSILAVDYPVDKVSCYVSDDGSAMLTFEALSETAEFARKWVPFCKKHNIEPRAPEFYFAQKIDYLKDKIQPSFVKERRAMKREYEEFKVRINALVAKAQKVPEEGWTMADGTAWPGNNPRDHPGMIQVFLGHSGGLDTDGNELPRLVYVSREKRPGFQHHKKAGAMNALIRVSAVLTNGAYLLNVDCDHYFNSSKALREAMCFMMDPALGRKTCYVQFPQRFDGIDLHDRYANRNIVFFDINMKGLDGIQGPVYVGTGCCFNRQALYGYDPVLTEADLEPNIVVKSCCGGRKKKSKSYMDSKNRMMKRTESSAPIFNMEDIEEGIEGYEDERSVLMSQKRLEKRFGQSPIFIASTFMTQGGIPPSTNPASLLKEAIHVISCGYEDKTEWGKEIGWIYGSVTEDILTGFKMHARGWISIYCMPPRPCFKGSAPINLSDRLNQVLRWALGSVEILLSRHCPIWYGYNGRLKLLERLAYINTIVYPITSIPLIAYCVLPAICLLTNKFIIPEISNYAGMFFILLFASIFATGILELRWSGVGIEDWWRNEQFWVIGGTSAHLFAVFQGLLKVLAGIDTNFTVTSKASDEDGDFAELYVFKWTSLLIPPTTVLVINLVGMVAGISYAINSGYQSWGPLFGKLFFSIWVILHLYPFLKGLMGRQNRTPTIVIVWSILLASIFSLLWVKIDPFISPTQKAVALGQCGVNC.

Topologically, residues 1-267 are cytoplasmic; it reads MAANAGMVAG…SRIVPIPSNQ (267 aa). Positions 41, 44, 60, 63, 68, 71, 83, and 86 each coordinate Zn(2+). The segment at 41–87 adopts an RING-type; degenerate zinc-finger fold; it reads CQICGDTVGVSATGDVFVACNECAFPVCRPCYEYERKEGNQCCPQCK. The segment at 119 to 179 is disordered; the sequence is HGNGKGPEWQ…HSIRSGTSSY (61 aa). A helical membrane pass occupies residues 268–288; that stretch reads LNLYRIVIILRLIILMFFFQY. The Extracellular portion of the chain corresponds to 289–296; it reads RVTHPVRD. A helical transmembrane segment spans residues 297–317; that stretch reads AYGLWLVSVICEIWFALSWLL. Residues 318 to 851 are Cytoplasmic-facing; the sequence is DQFPKWYPIN…LLERLAYINT (534 aa). Residues S356, K362, E363, and D392 each coordinate UDP-alpha-D-glucose. D392 is an active-site residue. The stretch at 446-473 forms a coiled coil; that stretch reads VKERRAMKREYEEFKVRINALVAKAQKV. A UDP-alpha-D-glucose-binding site is contributed by K533. K534 and D558 together coordinate Mn(2+). The active site involves D775. A helical transmembrane segment spans residues 852–872; sequence IVYPITSIPLIAYCVLPAICL. Over 873 to 884 the chain is Extracellular; that stretch reads LTNKFIIPEISN. The chain crosses the membrane as a helical span at residues 885–905; that stretch reads YAGMFFILLFASIFATGILEL. At 906-920 the chain is on the cytoplasmic side; the sequence is RWSGVGIEDWWRNEQ. A helical membrane pass occupies residues 921-941; it reads FWVIGGTSAHLFAVFQGLLKV. Residues 942 to 971 are Extracellular-facing; it reads LAGIDTNFTVTSKASDEDGDFAELYVFKWT. N948 is a glycosylation site (N-linked (GlcNAc...) asparagine). Residues 972–992 traverse the membrane as a helical segment; that stretch reads SLLIPPTTVLVINLVGMVAGI. The Cytoplasmic portion of the chain corresponds to 993-1003; that stretch reads SYAINSGYQSW. The chain crosses the membrane as a helical span at residues 1004–1024; that stretch reads GPLFGKLFFSIWVILHLYPFL. At 1025-1033 the chain is on the extracellular side; it reads KGLMGRQNR. The chain crosses the membrane as a helical span at residues 1034–1054; that stretch reads TPTIVIVWSILLASIFSLLWV. At 1055-1076 the chain is on the cytoplasmic side; sequence KIDPFISPTQKAVALGQCGVNC.

The protein belongs to the glycosyltransferase 2 family. Plant cellulose synthase subfamily. The cofactor is Zn(2+). It depends on Mn(2+) as a cofactor.

It localises to the cell membrane. The catalysed reaction is [(1-&gt;4)-beta-D-glucosyl](n) + UDP-alpha-D-glucose = [(1-&gt;4)-beta-D-glucosyl](n+1) + UDP + H(+). Its pathway is glycan metabolism; plant cellulose biosynthesis. In terms of biological role, catalytic subunit of cellulose synthase terminal complexes ('rosettes'), required for beta-1,4-glucan microfibril crystallization, a major mechanism of the cell wall formation. The polypeptide is Probable cellulose synthase A catalytic subunit 1 [UDP-forming] (CESA1) (Oryza sativa subsp. indica (Rice)).